The primary structure comprises 476 residues: UDP-glucose 6-dehydrogenase (476 aa).

Residues 7-12 (GAGYVG), aspartate 32, arginine 37, 85-89 (VNTPT), 126-127 (ST), and glutamate 161 contribute to the NAD(+) site. Substrate-binding positions include 157-161 (EFLAE), 216-220 (KLAAN), arginine 256, and 263-269 (QASVGFG). Residue cysteine 272 is the Nucleophile of the active site. 272–275 (CFQK) contacts NAD(+). Substrate is bound at residue 334–335 (FK). Arginine 342 contacts NAD(+). Arginine 439 is a binding site for substrate.

The protein belongs to the UDP-glucose/GDP-mannose dehydrogenase family.

The catalysed reaction is UDP-alpha-D-glucose + 2 NAD(+) + H2O = UDP-alpha-D-glucuronate + 2 NADH + 3 H(+). Its pathway is nucleotide-sugar biosynthesis; UDP-alpha-D-glucuronate biosynthesis; UDP-alpha-D-glucuronate from UDP-alpha-D-glucose: step 1/1. Its function is as follows. Involved in the biosynthesis of glycosaminoglycans; hyaluronan, chondroitin sulfate and heparan sulfate. Required for wingless signaling in different tissues. This is UDP-glucose 6-dehydrogenase (sgl) from Drosophila melanogaster (Fruit fly).